The chain runs to 138 residues: Histone H2B.4 (138 aa).

The segment covering 1–39 (MAPKAAEKKPAEKKPAGKAPAEKLPKAEKKISKDAGGSE) has biased composition (basic and acidic residues). The interval 1 to 48 (MAPKAAEKKPAEKKPAGKAPAEKLPKAEKKISKDAGGSEKKKKKSKKS) is disordered. Alanine 2 is subject to N,N,N-trimethylalanine; alternate. Position 2 is a n,N-dimethylalanine; alternate (alanine 2). Alanine 2 is subject to N-methylalanine; alternate. Lysine 4 bears the N6-methyllysine mark. N6-acetyllysine occurs at positions 8 and 13. At lysine 14 the chain carries N6,N6-dimethyllysine. Residues lysine 18, lysine 23, lysine 29, and lysine 30 each carry the N6-acetyllysine modification. Residue lysine 135 forms a Glycyl lysine isopeptide (Lys-Gly) (interchain with G-Cter in ubiquitin) linkage.

The protein belongs to the histone H2B family. As to quaternary structure, the nucleosome is a histone octamer containing two molecules each of H2A, H2B, H3 and H4 assembled in one H3-H4 heterotetramer and two H2A-H2B heterodimers. The octamer wraps approximately 147 bp of DNA. In terms of processing, can be acetylated to form H2BK6ac, H2BK33ac and H2BK34ac. Post-translationally, monoubiquitinated by BRE1 to form H2BK143ub1 and deubiquitinated by UBP26. Required for heterochromatic histone H3 di- and trimethylation at H3K4me. May give a specific tag for epigenetic transcriptional activation.

It localises to the nucleus. The protein localises to the chromosome. Functionally, core component of nucleosome. Nucleosomes wrap and compact DNA into chromatin, limiting DNA accessibility to the cellular machineries which require DNA as a template. Histones thereby play a central role in transcription regulation, DNA repair, DNA replication and chromosomal stability. DNA accessibility is regulated via a complex set of post-translational modifications of histones, also called histone code, and nucleosome remodeling. In Arabidopsis thaliana (Mouse-ear cress), this protein is Histone H2B.4.